The primary structure comprises 567 residues: Septation ring formation regulator EzrA (567 aa).

Topologically, residues methionine 1–glutamate 2 are extracellular. Residues phenylalanine 3–leucine 21 traverse the membrane as a helical segment. Over arginine 22–glutamine 567 the chain is Cytoplasmic. Coiled-coil stretches lie at residues isoleucine 108–glutamate 185, lysine 243–valine 375, and lysine 402–phenylalanine 529.

The protein belongs to the EzrA family.

It is found in the cell membrane. Negative regulator of FtsZ ring formation; modulates the frequency and position of FtsZ ring formation. Inhibits FtsZ ring formation at polar sites. Interacts either with FtsZ or with one of its binding partners to promote depolymerization. The sequence is that of Septation ring formation regulator EzrA from Bacillus pumilus (strain SAFR-032).